We begin with the raw amino-acid sequence, 294 residues long: Glutamate-binding protein GluB (294 aa).

The N-terminal stretch at methionine 1–alanine 26 is a signal peptide. Residue cysteine 27 is the site of N-palmitoyl cysteine attachment. Cysteine 27 carries S-diacylglycerol cysteine lipidation.

This sequence belongs to the bacterial solute-binding protein 3 family. As to quaternary structure, the complex is composed of two ATP-binding proteins (GluA), two transmembrane proteins (GluC and GluD) and a solute-binding protein (GluB).

Its subcellular location is the cell membrane. Its function is as follows. Part of the ABC transporter complex GluABCD involved in glutamate uptake. Binds glutamate with a high affinity. This chain is Glutamate-binding protein GluB, found in Corynebacterium efficiens (strain DSM 44549 / YS-314 / AJ 12310 / JCM 11189 / NBRC 100395).